A 632-amino-acid polypeptide reads, in one-letter code: tRNA uridine 5-carboxymethylaminomethyl modification enzyme MnmG (632 aa).

13–18 (GGGHAG) provides a ligand contact to FAD. An NAD(+)-binding site is contributed by 273 to 287 (GPRYCPSIEDKIHRF).

It belongs to the MnmG family. Homodimer. Heterotetramer of two MnmE and two MnmG subunits. FAD is required as a cofactor.

It is found in the cytoplasm. Its function is as follows. NAD-binding protein involved in the addition of a carboxymethylaminomethyl (cmnm) group at the wobble position (U34) of certain tRNAs, forming tRNA-cmnm(5)s(2)U34. The chain is tRNA uridine 5-carboxymethylaminomethyl modification enzyme MnmG from Psychrobacter arcticus (strain DSM 17307 / VKM B-2377 / 273-4).